Here is a 416-residue protein sequence, read N- to C-terminus: Tyrosine--tRNA ligase (416 aa).

Y39 is a binding site for L-tyrosine. The 'HIGH' region motif lies at 44–53 (CTAPSLHAGH). Y176 and Q180 together coordinate L-tyrosine. A 'KMSKS' region motif is present at residues 236–240 (KMGKT). K239 is a binding site for ATP. In terms of domain architecture, S4 RNA-binding spans 349–414 (ISLVDLLHDT…AGKKRHIKVV (66 aa)).

The protein belongs to the class-I aminoacyl-tRNA synthetase family. TyrS type 1 subfamily. As to quaternary structure, homodimer.

It is found in the cytoplasm. It catalyses the reaction tRNA(Tyr) + L-tyrosine + ATP = L-tyrosyl-tRNA(Tyr) + AMP + diphosphate + H(+). Functionally, catalyzes the attachment of tyrosine to tRNA(Tyr) in a two-step reaction: tyrosine is first activated by ATP to form Tyr-AMP and then transferred to the acceptor end of tRNA(Tyr). This Wolbachia pipientis wMel protein is Tyrosine--tRNA ligase.